A 336-amino-acid polypeptide reads, in one-letter code: 3-isopropylmalate dehydrogenase (336 aa).

4 residues coordinate substrate: R87, R97, R121, and D211. Mg(2+) is bound by residues D211, D235, and D239. 271–283 is an NAD(+) binding site; the sequence is GSAPDIAGQGIAD.

It belongs to the isocitrate and isopropylmalate dehydrogenases family. LeuB type 2 subfamily. As to quaternary structure, homodimer. Requires Mg(2+) as cofactor. Mn(2+) serves as cofactor.

The protein resides in the cytoplasm. It carries out the reaction (2R,3S)-3-isopropylmalate + NAD(+) = 4-methyl-2-oxopentanoate + CO2 + NADH. It functions in the pathway amino-acid biosynthesis; L-leucine biosynthesis; L-leucine from 3-methyl-2-oxobutanoate: step 3/4. In terms of biological role, catalyzes the oxidation of 3-carboxy-2-hydroxy-4-methylpentanoate (3-isopropylmalate) to 3-carboxy-4-methyl-2-oxopentanoate. The product decarboxylates to 4-methyl-2 oxopentanoate. This Mycobacterium bovis (strain ATCC BAA-935 / AF2122/97) protein is 3-isopropylmalate dehydrogenase.